We begin with the raw amino-acid sequence, 83 residues long: Small ribosomal subunit protein bS18A (83 aa).

The protein belongs to the bacterial ribosomal protein bS18 family. As to quaternary structure, part of the 30S ribosomal subunit. Forms a tight heterodimer with protein bS6.

Binds as a heterodimer with protein bS6 to the central domain of the 16S rRNA, where it helps stabilize the platform of the 30S subunit. This Mycolicibacterium vanbaalenii (strain DSM 7251 / JCM 13017 / BCRC 16820 / KCTC 9966 / NRRL B-24157 / PYR-1) (Mycobacterium vanbaalenii) protein is Small ribosomal subunit protein bS18A.